A 172-amino-acid polypeptide reads, in one-letter code: Adenine phosphoribosyltransferase (172 aa).

The protein belongs to the purine/pyrimidine phosphoribosyltransferase family. Homodimer.

The protein localises to the cytoplasm. The enzyme catalyses AMP + diphosphate = 5-phospho-alpha-D-ribose 1-diphosphate + adenine. The protein operates within purine metabolism; AMP biosynthesis via salvage pathway; AMP from adenine: step 1/1. Its function is as follows. Catalyzes a salvage reaction resulting in the formation of AMP, that is energically less costly than de novo synthesis. This Clostridium botulinum (strain ATCC 19397 / Type A) protein is Adenine phosphoribosyltransferase.